We begin with the raw amino-acid sequence, 183 residues long: Gamma-crystallin N (183 aa).

4 Beta/gamma crystallin 'Greek key' domains span residues 6–46 (GKIT…RVES), 47–89 (GAWV…RPVG), 95–136 (FRID…KVYG), and 138–180 (GAWV…RRVL).

Belongs to the beta/gamma-crystallin family. As to quaternary structure, monomer. As to expression, detected in the auditory hindbrain where it is highly expressed in the medial nucleus of the trapezoid body, but also present in other nuclei of the superior olivary complex.

In terms of biological role, crystallins are the dominant structural components of the vertebrate eye lens. Also plays an important role for integrity and function of auditory nuclei. The protein is Gamma-crystallin N of Rattus norvegicus (Rat).